We begin with the raw amino-acid sequence, 262 residues long: MSRIHPTAIVEPGAQLDESVEVGPYAVIGAHVTIGARTTVGSHSVIEGHTTLGEDNRIGHYASVGGRPQDMKYKDEPTRLVIGSRNTIREFTTIHTGTVQDSGVTTLGDDNWIMAYVHIGHDCHVGNNVILSSNAQMAGHVIIGDHAIVGGMSGVHQFVRIGAHSMLGGASALVQDIPPFVIAAGNKAEPHGINVEGLRRRGFSPDAISALRAAYRVLYKNGLSLEEAKVQLRELASAGGDGDEPVQTLLAFVEASQRGIIR.

It belongs to the transferase hexapeptide repeat family. LpxA subfamily. As to quaternary structure, homotrimer.

Its subcellular location is the cytoplasm. The catalysed reaction is a (3R)-hydroxyacyl-[ACP] + UDP-N-acetyl-alpha-D-glucosamine = a UDP-3-O-[(3R)-3-hydroxyacyl]-N-acetyl-alpha-D-glucosamine + holo-[ACP]. It participates in glycolipid biosynthesis; lipid IV(A) biosynthesis; lipid IV(A) from (3R)-3-hydroxytetradecanoyl-[acyl-carrier-protein] and UDP-N-acetyl-alpha-D-glucosamine: step 1/6. Its function is as follows. Involved in the biosynthesis of lipid A, a phosphorylated glycolipid that anchors the lipopolysaccharide to the outer membrane of the cell. This is Acyl-[acyl-carrier-protein]--UDP-N-acetylglucosamine O-acyltransferase from Paraburkholderia xenovorans (strain LB400).